The sequence spans 123 residues: Protein LLP homolog (123 aa).

Positions 1 to 21 are enriched in basic residues; that stretch reads MAKSLRSKWKRKMRAEKRKKN. Disordered stretches follow at residues 1-22 and 61-123; these read MAKS…KKNA and DLDV…KLAW. Residues 70–89 are compositionally biased toward basic and acidic residues; the sequence is ESSKMDTELKRNKKNLRDQH. A compositionally biased stretch (basic residues) spans 100 to 123; it reads QQKKLKSQCGKKKGKSKQAKKLAW.

It belongs to the learning-associated protein family.

Its subcellular location is the nucleus. The protein resides in the nucleolus. It localises to the chromosome. In terms of biological role, regulates dendritic and spine growth and synaptic transmission. The protein is Protein LLP homolog (llph) of Xenopus laevis (African clawed frog).